We begin with the raw amino-acid sequence, 285 residues long: NAD kinase (285 aa).

The active-site Proton acceptor is the Asp-68. Residues 68 to 69 (DG), 142 to 143 (ND), Arg-153, Lys-170, Asp-172, 183 to 188 (TAYNLS), and Gln-242 contribute to the NAD(+) site.

It belongs to the NAD kinase family. It depends on a divalent metal cation as a cofactor.

It localises to the cytoplasm. It catalyses the reaction NAD(+) + ATP = ADP + NADP(+) + H(+). Involved in the regulation of the intracellular balance of NAD and NADP, and is a key enzyme in the biosynthesis of NADP. Catalyzes specifically the phosphorylation on 2'-hydroxyl of the adenosine moiety of NAD to yield NADP. The sequence is that of NAD kinase from Syntrophotalea carbinolica (strain DSM 2380 / NBRC 103641 / GraBd1) (Pelobacter carbinolicus).